The primary structure comprises 150 residues: MGLHIGSLLICVFLGILPFATANTNRSGYEEQRNYLLNIFHNPLVNDSIKEKNIPELIAFYQRYPTDVPLSDADRQQFERFIHDYREYREVLVDGVPPQGGSFGNIFGHFLGRVGTRYISSLFNKKREEGQSNHANSPTTLPSRIQKMTK.

The N-terminal stretch at 1-22 (MGLHIGSLLICVFLGILPFATA) is a signal peptide. A disordered region spans residues 127–150 (REEGQSNHANSPTTLPSRIQKMTK). Residues 132-150 (SNHANSPTTLPSRIQKMTK) show a composition bias toward polar residues.

Belongs to the Turandot family.

The protein resides in the secreted. Functionally, a humoral factor that may play a role in stress tolerance. The chain is Protein Turandot X from Drosophila simulans (Fruit fly).